A 256-amino-acid chain; its full sequence is Cell division protein DivIB (256 aa).

Residues 1–23 lie on the Cytoplasmic side of the membrane; that stretch reads MSKDLISTDEYIKIKKKRKRIKK. A helical membrane pass occupies residues 24–44; the sequence is IVVLFIFLISILVTLCLKIPY. A POTRA domain is found at 45 to 113; that stretch reads FNIESIEIKG…NKLEIYVKER (69 aa). Residues 45–256 are Extracellular-facing; the sequence is FNIESIEIKG…EGNPVFYIEK (212 aa).

This sequence belongs to the FtsQ/DivIB family. DivIB subfamily.

The protein resides in the cell membrane. In terms of biological role, cell division protein that may be involved in stabilizing or promoting the assembly of the division complex. This Clostridium botulinum (strain Loch Maree / Type A3) protein is Cell division protein DivIB.